Here is a 513-residue protein sequence, read N- to C-terminus: Probable DNA ligase (513 aa).

Glutamate 213 is a binding site for ATP. Lysine 215 serves as the catalytic N6-AMP-lysine intermediate. ATP contacts are provided by arginine 220, arginine 235, glutamate 264, phenylalanine 304, arginine 376, and lysine 382.

Belongs to the ATP-dependent DNA ligase family. Mg(2+) is required as a cofactor.

The catalysed reaction is ATP + (deoxyribonucleotide)n-3'-hydroxyl + 5'-phospho-(deoxyribonucleotide)m = (deoxyribonucleotide)n+m + AMP + diphosphate.. Its function is as follows. DNA ligase that seals nicks in double-stranded DNA during DNA replication, DNA recombination and DNA repair. This is Probable DNA ligase from Anaeromyxobacter dehalogenans (strain 2CP-C).